The primary structure comprises 256 residues: D-aminoacyl-tRNA deacylase (256 aa).

It belongs to the DtdA deacylase family. In terms of assembly, monomer. The cofactor is Zn(2+).

The catalysed reaction is a D-aminoacyl-tRNA + H2O = a tRNA + a D-alpha-amino acid + H(+). The enzyme catalyses glycyl-tRNA(Ala) + H2O = tRNA(Ala) + glycine + H(+). Functionally, D-aminoacyl-tRNA deacylase with broad substrate specificity. By recycling D-aminoacyl-tRNA to D-amino acids and free tRNA molecules, this enzyme counteracts the toxicity associated with the formation of D-aminoacyl-tRNA entities in vivo. This Thermoplasma volcanium (strain ATCC 51530 / DSM 4299 / JCM 9571 / NBRC 15438 / GSS1) protein is D-aminoacyl-tRNA deacylase.